Here is a 230-residue protein sequence, read N- to C-terminus: Protein-L-isoaspartate O-methyltransferase 1 (230 aa).

Residue serine 65 is part of the active site.

The protein belongs to the methyltransferase superfamily. L-isoaspartyl/D-aspartyl protein methyltransferase family. As to quaternary structure, monomer. As to expression, expressed in roots, rosette leaves, stems, cauline leaves, flowers and developing seeds.

The protein resides in the cytoplasm. The catalysed reaction is [protein]-L-isoaspartate + S-adenosyl-L-methionine = [protein]-L-isoaspartate alpha-methyl ester + S-adenosyl-L-homocysteine. In terms of biological role, catalyzes the methyl esterification of L-isoaspartyl residues in peptides and proteins that result from spontaneous decomposition of normal L-aspartyl and L-asparaginyl residues. It plays a role in the repair and/or degradation of damaged proteins. Contributes to seed longevity and germination vigor by limiting the abnormal accumulation of the L-isoaspartyl residues in seed proteins. In Arabidopsis thaliana (Mouse-ear cress), this protein is Protein-L-isoaspartate O-methyltransferase 1 (PIMT1).